The chain runs to 196 residues: Anthranilate synthase component 2 (196 aa).

The 195-residue stretch at 1–195 (MLLLIDNYDS…LNTTRRLETA (195 aa)) folds into the Glutamine amidotransferase type-1 domain. Residue 52–54 (GPC) coordinates L-glutamine. Catalysis depends on C80, which acts as the Nucleophile; for GATase activity. L-glutamine-binding positions include Q84 and 130–131 (SL). Catalysis depends on for GATase activity residues H169 and E171.

Heterotetramer consisting of two non-identical subunits: a beta subunit (TrpG) and a large alpha subunit (TrpE).

It carries out the reaction chorismate + L-glutamine = anthranilate + pyruvate + L-glutamate + H(+). Its pathway is amino-acid biosynthesis; L-tryptophan biosynthesis; L-tryptophan from chorismate: step 1/5. Functionally, part of a heterotetrameric complex that catalyzes the two-step biosynthesis of anthranilate, an intermediate in the biosynthesis of L-tryptophan. In the first step, the glutamine-binding beta subunit (TrpG) of anthranilate synthase (AS) provides the glutamine amidotransferase activity which generates ammonia as a substrate that, along with chorismate, is used in the second step, catalyzed by the large alpha subunit of AS (TrpE) to produce anthranilate. In the absence of TrpG, TrpE can synthesize anthranilate directly from chorismate and high concentrations of ammonia. Participates in the tryptophan-dependent indole-3-acetic acid production, which is a phytohormone released by A.brasilense. This chain is Anthranilate synthase component 2 (trpG), found in Azospirillum brasilense.